The sequence spans 438 residues: V-type ATP synthase beta chain (438 aa).

It belongs to the ATPase alpha/beta chains family.

Produces ATP from ADP in the presence of a proton gradient across the membrane. The V-type beta chain is a regulatory subunit. The protein is V-type ATP synthase beta chain (atpB) of Chlamydia pneumoniae (Chlamydophila pneumoniae).